Here is a 315-residue protein sequence, read N- to C-terminus: Homoserine kinase (315 aa).

97–107 (PPARGLGSSAT) lines the ATP pocket.

This sequence belongs to the GHMP kinase family. Homoserine kinase subfamily.

The protein resides in the cytoplasm. It catalyses the reaction L-homoserine + ATP = O-phospho-L-homoserine + ADP + H(+). It participates in amino-acid biosynthesis; L-threonine biosynthesis; L-threonine from L-aspartate: step 4/5. Its function is as follows. Catalyzes the ATP-dependent phosphorylation of L-homoserine to L-homoserine phosphate. This is Homoserine kinase from Synechococcus sp. (strain CC9605).